Consider the following 1254-residue polypeptide: Receptor tyrosine-protein kinase erbB-2 (1254 aa).

Residues 1-22 form the signal peptide; the sequence is MELAAWCGWGLLLALLSPGASG. At 23–652 the chain is on the extracellular side; the sequence is TQVCTGTDMK…PAEQRASPAT (630 aa). Cysteine 26 and cysteine 53 form a disulfide bridge. N-linked (GlcNAc...) asparagine glycosylation is found at asparagine 68, asparagine 125, and asparagine 187. 14 cysteine pairs are disulfide-bonded: cysteine 162-cysteine 192, cysteine 195-cysteine 204, cysteine 199-cysteine 212, cysteine 236-cysteine 244, cysteine 240-cysteine 252, cysteine 255-cysteine 264, cysteine 268-cysteine 295, cysteine 299-cysteine 311, cysteine 315-cysteine 331, cysteine 334-cysteine 338, cysteine 342-cysteine 367, cysteine 475-cysteine 504, cysteine 511-cysteine 520, and cysteine 515-cysteine 528. A glycan (N-linked (GlcNAc...) asparagine) is linked at asparagine 259. N-linked (GlcNAc...) asparagine glycosylation occurs at asparagine 530. Intrachain disulfides connect cysteine 531-cysteine 540, cysteine 544-cysteine 560, cysteine 563-cysteine 576, cysteine 567-cysteine 584, cysteine 587-cysteine 596, cysteine 600-cysteine 623, cysteine 626-cysteine 634, and cysteine 630-cysteine 642. N-linked (GlcNAc...) asparagine glycosylation occurs at asparagine 571. Asparagine 629 carries N-linked (GlcNAc...) asparagine glycosylation. Residues 653–675 traverse the membrane as a helical segment; it reads SIIATVVGILLFLVIGVVVGILI. A required for interaction with KPNB1 and EEA1 region spans residues 676–689; it reads KRRRQKIRKYTMRR. The Nuclear localization signal motif lies at 676 to 689; that stretch reads KRRRQKIRKYTMRR. Residues 676 to 1254 are Cytoplasmic-facing; it reads KRRRQKIRKY…PEYLGLDVPV (579 aa). The Protein kinase domain maps to 720–987; the sequence is LRKVKVLGSG…RMARDPQRFV (268 aa). ATP-binding positions include 726–734 and lysine 753; that span reads LGSGAFGTV. Aspartate 845 functions as the Proton acceptor in the catalytic mechanism. A Phosphotyrosine modification is found at tyrosine 877. Disordered stretches follow at residues 1029–1116 and 1133–1179; these read GFFF…SEDP and CSPQ…GKNG. Serine 1054, serine 1078, serine 1083, and serine 1107 each carry phosphoserine. Tyrosine 1112 carries the post-translational modification Phosphotyrosine. Tyrosine 1139 bears the Phosphotyrosine; by autocatalysis mark. Residues 1146 to 1161 are compositionally biased toward pro residues; it reads RPQPPLTPEGPLPPVR. A Phosphothreonine modification is found at threonine 1166. The tract at residues 1195–1197 is interaction with PIK3C2B; that stretch reads EYL. Tyrosine 1196 is modified (phosphotyrosine). The tract at residues 1223–1254 is disordered; sequence DQDPSERGSPPNTFEGTPTAENPEYLGLDVPV. Positions 1232–1242 are enriched in polar residues; that stretch reads PPNTFEGTPTA. Position 1247 is a phosphotyrosine; by autocatalysis (tyrosine 1247).

This sequence belongs to the protein kinase superfamily. Tyr protein kinase family. EGF receptor subfamily. As to quaternary structure, homodimer. Heterodimer with EGFR, ERBB3 and ERBB4. Part of a complex with EGFR and either PIK3C2A or PIK3C2B. May interact with PIK3C2B when phosphorylated on Tyr-1196. Interacts with PRKCABP and PLXNB1. Interacts (when phosphorylated on Tyr-1247) with MEMO. Interacts with MUC1. Interacts (when phosphorylated on Tyr-1139) with GRB7 (via SH2 domain). Interacts (when phosphorylated on Tyr-1247) with ERBIN. Interacts with SRC, KPNB1, RANBP2, EEA1, CRM1, CLTC, PTK6, RPA194, MYOC and ACTB. Interacts (preferentially with the tyrosine phosphorylated form) with CPNE3; this interaction occurs at the cell membrane and is increased in a growth factor heregulin-dependent manner. Interacts with HSP90AA1 and HSP90AB1 in an ATP-dependent manner; the interaction suppresses ERBB2 kinase activity. Interacts with SORL1; this interaction regulates ERBB2 subcellular distribution by promoting its recycling after internalization from endosomes back to the plasma membrane, hence stimulates ERBB2-mediated signaling. Interacts with SH3BGRL. Interacts with ROR1. In terms of processing, autophosphorylated. Autophosphorylation occurs in trans, i.e. one subunit of the dimeric receptor phosphorylates tyrosine residues on the other subunit. Ligand-binding increases phosphorylation on tyrosine residues. Signaling via SEMA4C promotes phosphorylation at Tyr-1247. Dephosphorylated by PTPN12.

The protein localises to the cell membrane. The protein resides in the cell projection. It localises to the ruffle membrane. It is found in the early endosome. Its subcellular location is the cytoplasm. The protein localises to the perinuclear region. The protein resides in the nucleus. It catalyses the reaction L-tyrosyl-[protein] + ATP = O-phospho-L-tyrosyl-[protein] + ADP + H(+). Protein tyrosine kinase that is part of several cell surface receptor complexes, but that apparently needs a coreceptor for ligand binding. Essential component of a neuregulin-receptor complex, although neuregulins do not interact with it alone. GP30 is a potential ligand for this receptor. Regulates outgrowth and stabilization of peripheral microtubules (MTs). Upon ERBB2 activation, the MEMO1-RHOA-DIAPH1 signaling pathway elicits the phosphorylation and thus the inhibition of GSK3B at cell membrane. This prevents the phosphorylation of APC and CLASP2, allowing its association with the cell membrane. In turn, membrane-bound APC allows the localization of MACF1 to the cell membrane, which is required for microtubule capture and stabilization. In terms of biological role, in the nucleus is involved in transcriptional regulation. Associates with the 5'-TCAAATTC-3' sequence in the PTGS2/COX-2 promoter and activates its transcription. Implicated in transcriptional activation of CDKN1A; the function involves STAT3 and SRC. Involved in the transcription of rRNA genes by RNA Pol I and enhances protein synthesis and cell growth. The sequence is that of Receptor tyrosine-protein kinase erbB-2 (ERBB2) from Mesocricetus auratus (Golden hamster).